The following is a 539-amino-acid chain: Histone-arginine methyltransferase CARMER (539 aa).

The 310-residue stretch at 149–458 folds into the SAM-dependent MTase PRMT-type domain; sequence ASQYFQFYGY…QSYDVTIDLH (310 aa). Residues glutamine 162, arginine 171, glycine 195, glutamate 217, glutamate 246, and threonine 274 each contribute to the S-adenosyl-L-methionine site. Residue arginine 509 is modified to Asymmetric dimethylarginine; by autocatalysis.

The protein belongs to the class I-like SAM-binding methyltransferase superfamily. Protein arginine N-methyltransferase family. As to quaternary structure, homodimer. Post-translationally, the dimethylated protein is the major form.

It localises to the cytoplasm. The protein localises to the nucleus. The enzyme catalyses L-arginyl-[protein] + 2 S-adenosyl-L-methionine = N(omega),N(omega)-dimethyl-L-arginyl-[protein] + 2 S-adenosyl-L-homocysteine + 2 H(+). In terms of biological role, methylates (mono- and asymmetric dimethylation) the guanidino nitrogens of arginyl residues in proteins. May methylate histone H3 at 'Arg-17' and activate transcription via chromatin remodeling. The polypeptide is Histone-arginine methyltransferase CARMER (Art4) (Drosophila mojavensis (Fruit fly)).